The chain runs to 275 residues: Dermonecrotic toxin LamSicTox-alphaIV1iii (275 aa).

His5 is an active-site residue. The Mg(2+) site is built by Glu25 and Asp27. The active-site Nucleophile is His41. 2 disulfide bridges follow: Cys45–Cys51 and Cys47–Cys192. A Mg(2+)-binding site is contributed by Asp85.

This sequence belongs to the arthropod phospholipase D family. Class II subfamily. The cofactor is Mg(2+). Expressed by the venom gland.

Its subcellular location is the secreted. The enzyme catalyses an N-(acyl)-sphingosylphosphocholine = an N-(acyl)-sphingosyl-1,3-cyclic phosphate + choline. It carries out the reaction an N-(acyl)-sphingosylphosphoethanolamine = an N-(acyl)-sphingosyl-1,3-cyclic phosphate + ethanolamine. The catalysed reaction is a 1-acyl-sn-glycero-3-phosphocholine = a 1-acyl-sn-glycero-2,3-cyclic phosphate + choline. It catalyses the reaction a 1-acyl-sn-glycero-3-phosphoethanolamine = a 1-acyl-sn-glycero-2,3-cyclic phosphate + ethanolamine. Dermonecrotic toxins cleave the phosphodiester linkage between the phosphate and headgroup of certain phospholipids (sphingolipid and lysolipid substrates), forming an alcohol (often choline) and a cyclic phosphate. This toxin acts on sphingomyelin (SM). It may also act on ceramide phosphoethanolamine (CPE), lysophosphatidylcholine (LPC) and lysophosphatidylethanolamine (LPE), but not on lysophosphatidylserine (LPS), and lysophosphatidylglycerol (LPG). It acts by transphosphatidylation, releasing exclusively cyclic phosphate products as second products. Induces dermonecrosis, hemolysis, increased vascular permeability, edema, inflammatory response, and platelet aggregation. This is Dermonecrotic toxin LamSicTox-alphaIV1iii from Loxosceles amazonica (Recluse spider).